The following is a 547-amino-acid chain: Pyochelin synthase PchD (547 aa).

Belongs to the ATP-dependent AMP-binding enzyme family.

It catalyses the reaction salicylate + holo-[ACP] + ATP = salicyl-[ACP] + AMP + diphosphate. Its pathway is siderophore biosynthesis. It functions in the pathway antifungal biosynthesis. In terms of biological role, involved in the biosynthesis of the siderophore pyochelin. Specifically adenylates salicylate and loads it onto the holo form of PchE via a thioester linkage to the phosphopanthetheine moiety. Is also involved in the synthesis of the antifungal antibiotic dihydroaeruginoic acid (Dha or hydroxyphenyl-thiazolinyl-carboxylate), a precursor of pyochelin. This is Pyochelin synthase PchD from Pseudomonas aeruginosa (strain ATCC 15692 / DSM 22644 / CIP 104116 / JCM 14847 / LMG 12228 / 1C / PRS 101 / PAO1).